Here is a 253-residue protein sequence, read N- to C-terminus: FAS1 domain-containing protein CAGL0M08734g (253 aa).

The N-terminal stretch at 1-16 is a signal peptide; sequence MVALKYVLVPVALVAA. One can recognise an FAS1 domain in the interval 84–248; that stretch reads DIYLDSQISV…GVILVIDATL (165 aa).

The protein localises to the vacuole. This is FAS1 domain-containing protein CAGL0M08734g from Candida glabrata (strain ATCC 2001 / BCRC 20586 / JCM 3761 / NBRC 0622 / NRRL Y-65 / CBS 138) (Yeast).